A 392-amino-acid polypeptide reads, in one-letter code: Putative 8-amino-7-oxononanoate synthase (392 aa).

Arg22 is a substrate binding site. Residue 109-110 (GW) coordinates pyridoxal 5'-phosphate. A substrate-binding site is contributed by His139. Pyridoxal 5'-phosphate is bound by residues Ser187, 212 to 215 (DEAH), and 239 to 242 (TFSK). Lys242 carries the N6-(pyridoxal phosphate)lysine modification. Thr356 provides a ligand contact to substrate.

It belongs to the class-II pyridoxal-phosphate-dependent aminotransferase family. BioF subfamily. Homodimer. Pyridoxal 5'-phosphate serves as cofactor.

It carries out the reaction 6-carboxyhexanoyl-[ACP] + L-alanine + H(+) = (8S)-8-amino-7-oxononanoate + holo-[ACP] + CO2. It participates in cofactor biosynthesis; biotin biosynthesis. In terms of biological role, catalyzes the decarboxylative condensation of pimeloyl-[acyl-carrier protein] and L-alanine to produce 8-amino-7-oxononanoate (AON), [acyl-carrier protein], and carbon dioxide. The sequence is that of Putative 8-amino-7-oxononanoate synthase (bioF) from Paramagnetospirillum magneticum (strain ATCC 700264 / AMB-1) (Magnetospirillum magneticum).